A 372-amino-acid polypeptide reads, in one-letter code: Silphinene synthase peniA (372 aa).

Mg(2+) is bound by residues aspartate 116, glutamate 121, asparagine 263, serine 267, and glutamate 271. The short motif at 116–121 is the DDXXE motif element; the sequence is DDQFDE.

It belongs to the terpene synthase family. The cofactor is Mg(2+).

The enzyme catalyses (2E,6E)-farnesyl diphosphate = silphinene + diphosphate. It functions in the pathway secondary metabolite biosynthesis; terpenoid biosynthesis. Functionally, sesquiterpene cyclase; part of the gene cluster that mediates the biosynthesis of penifulvin A, a potent insecticidal sesquiterpene that features a [5.5.5.6]dioxafenestrane ring. Within the pathway, peniA catalyzes the first step and generates the angular triquinane scaffold silphinene via cyclization of the linear farnesyl pyrophosphate (FPP). The cytochrome P450 monooxygenase peniB and the flavin-dependent monooxygenase peniC then catalyze a series of oxidation reactions to transform silphinene into penifulvin A. The chain is Silphinene synthase peniA from Penicillium patulum (Penicillium griseofulvum).